A 495-amino-acid chain; its full sequence is Taxoid 2-alpha-hydroxylase (495 aa).

A helical transmembrane segment spans residues 17–37; the sequence is LQSSAILLTVVSGIIVIVILL. Cys-441 is a heme binding site.

This sequence belongs to the cytochrome P450 family.

It localises to the microsome membrane. It catalyses the reaction taxusin + reduced [NADPH--hemoprotein reductase] + O2 = 2alpha-hydroxytaxusin + oxidized [NADPH--hemoprotein reductase] + H2O + H(+). It carries out the reaction 7beta-hydroxytaxusin + reduced [NADPH--hemoprotein reductase] + O2 = 2alpha,7beta-dihydroxytaxusin + oxidized [NADPH--hemoprotein reductase] + H2O + H(+). It participates in alkaloid biosynthesis; taxol biosynthesis. In terms of biological role, catalyzes the conversion of taxusin to 2-alpha-hydroxytaxusin in taxol biosynthesis. Catalyzes the conversion of 7-beta-hydroxytaxusin to 2-alpha-7-beta-hydroxytaxusin in taxol biosynthesis. The sequence is that of Taxoid 2-alpha-hydroxylase from Taxus canadensis (Canadian yew).